The following is a 1879-amino-acid chain: Genome polyprotein (1879 aa).

The interval 37-98 (GPLDHDSRHG…TSTDVVRSGP (62 aa)) is disordered. The segment covering 38 to 50 (PLDHDSRHGRDPV) has biased composition (basic and acidic residues). The span at 79-93 (SGTNPSHLKPTSTDV) shows a compositional bias: polar residues. The 157-residue stretch at 564–720 (DNVISCCTRR…ENWKRENPGK (157 aa)) folds into the SF3 helicase domain. Position 590–597 (590–597 (GPPGCGKT)) interacts with ATP. Tyrosine 1093 is subject to O-(5'-phospho-RNA)-tyrosine. The Peptidase C24 domain maps to 1188-1341 (GVTHKNAIVS…KLIVPYVKVD (154 aa)). Residues histidine 1222, glutamate 1243, and cysteine 1305 each act as for 3CLpro activity in the active site. The 126-residue stretch at 1591-1716 (HDRYCVDYSK…IVPPLISSVM (126 aa)) folds into the RdRp catalytic domain.

As to quaternary structure, homodimer. Interacts with NTPase, protein p30 and protease-polymerase p76. Interacts with capsid protein VP1 and protease-polymerase p76. Interacts with host IEF4e; this interaction plays a role in translation of viral proteins. In terms of assembly, homooligomer. Interacts with Vpg, protein p32 and may interact with capsid protein VP1. Post-translationally, specific enzymatic cleavages in vivo yield mature proteins. Pro-Pol is first autocatalytically cleaved, then processes the whole polyprotein. In terms of processing, VPg is uridylylated by the polymerase and is covalently attached to the 5'-end of the polyadenylated genomic and subgenomic RNAs. This uridylylated form acts as a nucleotide-peptide primer for the polymerase.

It is found in the host endoplasmic reticulum membrane. The catalysed reaction is a ribonucleoside 5'-triphosphate + H2O = a ribonucleoside 5'-diphosphate + phosphate + H(+). It catalyses the reaction RNA(n) + a ribonucleoside 5'-triphosphate = RNA(n+1) + diphosphate. It carries out the reaction Endopeptidase with a preference for cleavage when the P1 position is occupied by Glu-|-Xaa and the P1' position is occupied by Gly-|-Yaa.. Together with NTPase and NS4, initiates the formation of the replication complex. Induces the proliferation of the host smooth ER membranes forming long tubular structures. These remodeled membranes probably form the viral factories that contain the replication complex. In terms of biological role, displays NTPase activity, but no helicase activity. Induces the formation of convoluted membranes derived from the host ER. These remodeled membranes probably form the viral factories that contain the replication complex. Together with NS2 and NS4, initiates the formation of the replication complex. Its function is as follows. Probable key protein responsible for the formation of membrane alterations by the virus. Induces the formation of convoluted membranes derived from the host ER. These remodeled membranes probably form the viral factories that contain the replication complex. Together with NS2 and NTPase, initiates the formation of the replication complex. Functionally, viral genome-linked protein is covalently linked to the 5'-end of the positive-strand, negative-strand genomic RNAs and subgenomic RNA. Acts as a genome-linked replication primer. May recruit ribosome to viral RNA thereby promoting viral proteins translation. Interacts with host translation initiation complex to allow the translation of viral proteins. Protease-polymerase p76 processes the polyprotein: Pro-Pol is first released by autocleavage, then all other proteins are cleaved. Cleaves host translation initiation factor eIF4G1, eIF4G2 and PABP1 thereby inducing a shutdown of host protein synthesis. This shutdown may not prevent viral mRNA from being translated since viral Vpg replaces the cap. Also functions as an RNA-directed RNA polymerase, which replicates genomic and antigenomic viral RNA by recognizing specific signals. Also transcribes a subgenomic mRNA by initiating RNA synthesis internally on antigenomic RNA. This sgRNA codes for structural proteins. Catalyzes the covalent attachment VPg with viral RNAs. This is Genome polyprotein from Otariidae (fur seals &amp; sea lions).